We begin with the raw amino-acid sequence, 142 residues long: Small ribosomal subunit protein uS9 (142 aa).

Positions 117-142 (KGDPRRTEHKKPGIKHARSKRQKAYR) are disordered. Residues 123 to 142 (TEHKKPGIKHARSKRQKAYR) are compositionally biased toward basic residues.

It belongs to the universal ribosomal protein uS9 family.

The sequence is that of Small ribosomal subunit protein uS9 from Pyrobaculum aerophilum (strain ATCC 51768 / DSM 7523 / JCM 9630 / CIP 104966 / NBRC 100827 / IM2).